Here is a 776-residue protein sequence, read N- to C-terminus: Transcription factor MYB3R-1 (776 aa).

Positions 1 to 41 (MKREMKAPTTPLESLQGDLKGKQGRTSGPARRSTKGQWTPE) are disordered. HTH myb-type domains are found at residues 30 to 81 (ARRS…QKVL), 82 to 137 (NPEL…NPGI), and 138 to 188 (NKNA…KKKL). 3 DNA-binding regions (H-T-H motif) span residues 58 to 81 (WKKI…QKVL), 110 to 133 (WSTI…HNHL), and 161 to 184 (WAEL…NSSV). Disordered stretches follow at residues 217–253 (SSWM…STND), 364–384 (FQSS…TDPE), and 401–435 (DNMK…AETH). 3 stretches are compositionally biased toward polar residues: residues 240–253 (CSQA…STND), 364–380 (FQSS…SNSD), and 423–432 (GKGSLCSQAA). The short motif at 648-655 (KKRHRDLL) is the Nuclear localization signal element.

In terms of assembly, component of a DREAM-like complex which modulates a variety of developmentally regulated genes and of the mitotic genes in proliferating and differentiated cells. In terms of tissue distribution, expressed ubiquitously at low levels. Expressed in roots, cotyledons, flowers and leaves, especially in vascular tissues.

The protein resides in the nucleus. In terms of biological role, transcription factor that binds 5'-AACGG-3' motifs in gene promoters. Transcription activator involved in the regulation of cytokinesis, probably via the activation of several G2/M phase-specific genes transcription (e.g. KNOLLE). Transcription repressor that regulates organ growth. Binds to the promoters of G2/M-specific genes and to E2F target genes to prevent their expression in post-mitotic cells and to restrict the time window of their expression in proliferating cells. Required for the maintenance of diploidy. The chain is Transcription factor MYB3R-1 from Arabidopsis thaliana (Mouse-ear cress).